A 1108-amino-acid polypeptide reads, in one-letter code: Retinal guanylyl cyclase 1 (1108 aa).

The first 54 residues, 1–54 (MSAWLLPAGGLPGAGFCVPARQSPSSFSRVLRWPRPGLPGLLLLLLLPSPSALS), serve as a signal peptide directing secretion. The Extracellular segment spans residues 55 to 465 (AVFKVGVLGP…PDVICNGGVE (411 aa)). Cys108 and Cys136 are joined by a disulfide. Asn300 carries an N-linked (GlcNAc...) asparagine glycan. A helical transmembrane segment spans residues 466-490 (PGLVFVGFLLVIGMGLTGAFLAHYL). In terms of domain architecture, Protein kinase spans 491-811 (RHRLLHMQMA…DLTFDLFKSI (321 aa)). The Cytoplasmic portion of the chain corresponds to 491 to 1108 (RHRLLHMQMA…KARPGQFTGK (618 aa)). The 131-residue stretch at 883-1013 (TLYFSDIVGF…DTVNTASRME (131 aa)) folds into the Guanylate cyclase domain. Residues 1069-1108 (IPKPPDLQPGASNHGISLQEIPPERRKKLEKARPGQFTGK) are disordered.

The protein belongs to the adenylyl cyclase class-4/guanylyl cyclase family. As to quaternary structure, homodimer; requires homodimerization for guanylyl cyclase activity. Interacts (via C-terminus) with RD3 (via C-terminus); promotes the exit of GUCY2E from the endoplasmic reticulum and its trafficking to the photoreceptor outer segments. Interaction with RD3 negatively regulates GUCY2E guanylate cyclase activity. In terms of processing, there are 9 conserved cysteine residues in sensory guanylate cyclases, 6 in the extracellular domain, which may be involved in intra- or interchain disulfide bonds.

The protein localises to the photoreceptor outer segment membrane. It is found in the endoplasmic reticulum membrane. The catalysed reaction is GTP = 3',5'-cyclic GMP + diphosphate. Activated by GUCA1A when free calcium ions concentration is low, and inhibited by GUCA1A when free calcium ions concentration is high. Negatively regulated by RD3; RD3 inhibits the basal and GUCA1A-stimulated guanylate cyclase activity. In terms of biological role, catalyzes the synthesis of cyclic GMP (cGMP) in rods and cones of photoreceptors. Plays an essential role in phototransduction, by mediating cGMP replenishment. May also participate in the trafficking of membrane-asociated proteins to the photoreceptor outer segment membrane. The chain is Retinal guanylyl cyclase 1 (Gucy2e) from Mus musculus (Mouse).